Reading from the N-terminus, the 84-residue chain is Sulfur carrier protein TusA (84 aa).

C19 functions as the Cysteine persulfide intermediate in the catalytic mechanism.

Belongs to the sulfur carrier protein TusA family. Interacts with IscS.

Its subcellular location is the cytoplasm. It functions in the pathway tRNA modification. Functionally, sulfur carrier protein involved in sulfur trafficking in the cell. Part of a sulfur-relay system required for 2-thiolation during synthesis of 2-thiouridine of the modified wobble base 5-methylaminomethyl-2-thiouridine (mnm(5)s(2)U) in tRNA. Interacts with IscS and stimulates its cysteine desulfurase activity. Accepts an activated sulfur from IscS, which is then transferred to TusD, and thus determines the direction of sulfur flow from IscS to 2-thiouridine formation. Also appears to be involved in sulfur transfer for the biosynthesis of molybdopterin. In Yersinia enterocolitica serotype O:8 / biotype 1B (strain NCTC 13174 / 8081), this protein is Sulfur carrier protein TusA.